We begin with the raw amino-acid sequence, 284 residues long: Tropomyosin-1 (284 aa).

Residues 1 to 284 (MDAIKKKMLA…DSTFAELAGY (284 aa)) adopt a coiled-coil conformation. Residues 103 to 131 (EERLQSATEKLEEASKAADESERGRKVLE) are disordered.

This sequence belongs to the tropomyosin family. In terms of assembly, homodimer.

Its function is as follows. Tropomyosin, in association with the troponin complex, plays a central role in the calcium dependent regulation of muscle contraction. The protein is Tropomyosin-1 of Biomphalaria glabrata (Bloodfluke planorb).